The sequence spans 501 residues: Lysine--tRNA ligase (501 aa).

Residues glutamate 411 and glutamate 418 each coordinate Mg(2+).

It belongs to the class-II aminoacyl-tRNA synthetase family. In terms of assembly, homodimer. The cofactor is Mg(2+).

The protein resides in the cytoplasm. It catalyses the reaction tRNA(Lys) + L-lysine + ATP = L-lysyl-tRNA(Lys) + AMP + diphosphate. The sequence is that of Lysine--tRNA ligase from Aliivibrio fischeri (strain ATCC 700601 / ES114) (Vibrio fischeri).